A 97-amino-acid chain; its full sequence is ATP-dependent Clp protease adapter protein ClpS (97 aa).

The protein belongs to the ClpS family. In terms of assembly, binds to the N-terminal domain of the chaperone ClpA.

Involved in the modulation of the specificity of the ClpAP-mediated ATP-dependent protein degradation. The polypeptide is ATP-dependent Clp protease adapter protein ClpS (Nostoc sp. (strain PCC 7120 / SAG 25.82 / UTEX 2576)).